A 415-amino-acid polypeptide reads, in one-letter code: MEQLWLFENEDRISELHEALLVHIMSSLPTKTVVATSVLSKRWRHVWKTVQNLKFVSKYHQTFSEDVYRFFMLHKAPFLESLDLEFSNQLDASDLGILVGIAFARHVRNLVLDLDYYSNFSQLCAARFPSGLCIYDNNKTLETLTLKHSILLYFPYRVCLKSLRKLHLYKVHFYGKDSVYNLLCGCPSLRDLIVHRYRECMETFTIAVPSLERLTIEDSGFGYGCCYVINAPSLKYLNIRRFKYLNSCLIEKAPELAEAKVSDVSDIENENILESLTSAKRLSIHLSPLEWWNLLTFMLEASPKLQILKLTDLNMSSTKGNQIGQKWIQPKCVPECLLFHLETFVWTGYEWQRRDEKEVARYILRNTTSLKKATFSTKPIEPVKLKVFKKRREILNELASLGRASNPSDFVFESI.

Residues 10-58 (EDRISELHEALLVHIMSSLPTKTVVATSVLSKRWRHVWKTVQNLKFVSK) form the F-box domain. LRR repeat units follow at residues 60 to 86 (HQTF…DLEF), 87 to 114 (SNQL…VLDL), 143 to 170 (TLTL…HLYK), 171 to 196 (VHFY…IVHR), and 213 to 241 (RLTI…NIRR). One can recognise an FBD domain in the interval 272–377 (ILESLTSAKR…TSLKKATFST (106 aa)).

In Arabidopsis thaliana (Mouse-ear cress), this protein is Putative F-box/FBD/LRR-repeat protein At3g49040.